The sequence spans 309 residues: UDP-N-acetylenolpyruvoylglucosamine reductase (309 aa).

The region spanning 33–195 is the FAD-binding PCMH-type domain; it reads VGGQAETLFR…VRARLRTRPG (163 aa). Residue Arg175 is part of the active site. Ser224 serves as the catalytic Proton donor. The active site involves Glu294.

This sequence belongs to the MurB family. Requires FAD as cofactor.

The protein resides in the cytoplasm. The enzyme catalyses UDP-N-acetyl-alpha-D-muramate + NADP(+) = UDP-N-acetyl-3-O-(1-carboxyvinyl)-alpha-D-glucosamine + NADPH + H(+). The protein operates within cell wall biogenesis; peptidoglycan biosynthesis. In terms of biological role, cell wall formation. The chain is UDP-N-acetylenolpyruvoylglucosamine reductase from Granulibacter bethesdensis (strain ATCC BAA-1260 / CGDNIH1).